The chain runs to 155 residues: Ribosomal RNA large subunit methyltransferase H (155 aa).

Residues leucine 73, glycine 104, and 123-128 (LSPLTL) contribute to the S-adenosyl-L-methionine site.

The protein belongs to the RNA methyltransferase RlmH family. In terms of assembly, homodimer.

Its subcellular location is the cytoplasm. It catalyses the reaction pseudouridine(1915) in 23S rRNA + S-adenosyl-L-methionine = N(3)-methylpseudouridine(1915) in 23S rRNA + S-adenosyl-L-homocysteine + H(+). Its function is as follows. Specifically methylates the pseudouridine at position 1915 (m3Psi1915) in 23S rRNA. This Ectopseudomonas mendocina (strain ymp) (Pseudomonas mendocina) protein is Ribosomal RNA large subunit methyltransferase H.